We begin with the raw amino-acid sequence, 82 residues long: MAVVIRLARMGAKHEPKYRVTVADSRRYVTGKFLDILGTYIPSPKGNDKKIELDLAKVEEWIKKGAQPTDRVKHVIKLAQAK.

Belongs to the bacterial ribosomal protein bS16 family.

This Bdellovibrio bacteriovorus (strain ATCC 15356 / DSM 50701 / NCIMB 9529 / HD100) protein is Small ribosomal subunit protein bS16.